The primary structure comprises 291 residues: Ribonuclease Z (291 aa).

Zn(2+)-binding residues include His-61, His-63, Asp-65, His-66, His-133, Asp-201, and His-257. The active-site Proton acceptor is Asp-65.

This sequence belongs to the RNase Z family. As to quaternary structure, homodimer. The cofactor is Zn(2+).

It catalyses the reaction Endonucleolytic cleavage of RNA, removing extra 3' nucleotides from tRNA precursor, generating 3' termini of tRNAs. A 3'-hydroxy group is left at the tRNA terminus and a 5'-phosphoryl group is left at the trailer molecule.. In terms of biological role, zinc phosphodiesterase, which displays some tRNA 3'-processing endonuclease activity. Probably involved in tRNA maturation, by removing a 3'-trailer from precursor tRNA. This chain is Ribonuclease Z, found in Saccharolobus islandicus (strain M.16.27) (Sulfolobus islandicus).